We begin with the raw amino-acid sequence, 859 residues long: MLRGQAREEDSVVLIDMASPEAGNGCSYGSTAQASEAGKQQVAPSRVGSSAKPPIDFVLVWEEDLRNQENPTKDKTDTHEVWRETFLENLCLAGLKIDQHDVQDEAAAVHYILLRAPWAVLCYYAEDLRLKLPLQELPNQASNWSATLLEWLGIPNILLEHVPDTPPEYYSCQFKASKLQWFLGSDNQDTFFTSTKRHQILFEILAKTPYGHEKKGLFGIDQLLAEGVFSAAFPLHDGPFSAVPESSQVLGLIQRQVLFQHWARWGKWNKYQPLDHVRRYFGEKVALYFAWLGFYTGWLLPAAVVGTVVFLVGCFLVFSDIPTQELCHSSDSFDMCPLCSDCSFWLLSSACTLAQAGRLFDHGGTVFFSLFMALWAVLLLEYWKRKNATLAYRWDCSDYEDIEERPRPQFAATAPMTALNPITGEDEPYFPEKNRVRRMLAGSVVLLMMVAVVIMCLVSVILYRAVMAIIVSRSDNAFLSAWASRIASLTGSVVNLVFILILSKVYVLLAQVLTRWEMHRTQTEFEDAFTLKVFIFQFVNFYASPVYIAFFKGRFVGYPGNYHTLFGIRNEECPAGGCLSELAQELLVIMVGKQIINNVQEVLVPKLKGCWQKFSRGKKAGTGTHPAPWEADYELLPCEGLFHEYLEMVLQFGFVTIFVAACPLAPLFALLNNWVEIRLDARKFVCEYRRPVAERAQDIGIWFHILTGLTHLAVISNAFLLAFSSDFLPRVYYSWTHAPDLHGFLNFTLARAPPTFTSAHNRTCRYRAFRDDDGHYSPTYWTLLAIRLAFVIVFEHVVFSIGRVLDLLVPDIPESVEIKVKREYYLAKQALAENEALLGATGVKDDQPPSSEPSLGLPA.

Topologically, residues 1–297 (MLRGQAREED…YFAWLGFYTG (297 aa)) are cytoplasmic. The disordered stretch occupies residues 25 to 50 (GCSYGSTAQASEAGKQQVAPSRVGSS). A helical membrane pass occupies residues 298–318 (WLLPAAVVGTVVFLVGCFLVF). Topologically, residues 319–362 (SDIPTQELCHSSDSFDMCPLCSDCSFWLLSSACTLAQAGRLFDH) are extracellular. Residues 363–383 (GGTVFFSLFMALWAVLLLEYW) form a helical membrane-spanning segment. Over 384-441 (KRKNATLAYRWDCSDYEDIEERPRPQFAATAPMTALNPITGEDEPYFPEKNRVRRMLA) the chain is Cytoplasmic. The helical transmembrane segment at 442-462 (GSVVLLMMVAVVIMCLVSVIL) threads the bilayer. Over 463–492 (YRAVMAIIVSRSDNAFLSAWASRIASLTGS) the chain is Extracellular. A helical transmembrane segment spans residues 493-513 (VVNLVFILILSKVYVLLAQVL). Residues 514 to 530 (TRWEMHRTQTEFEDAFT) lie on the Cytoplasmic side of the membrane. The helical transmembrane segment at 531–551 (LKVFIFQFVNFYASPVYIAFF) threads the bilayer. The Extracellular portion of the chain corresponds to 552–651 (KGRFVGYPGN…FHEYLEMVLQ (100 aa)). The chain crosses the membrane as a helical span at residues 652–672 (FGFVTIFVAACPLAPLFALLN). Residues 673-700 (NWVEIRLDARKFVCEYRRPVAERAQDIG) lie on the Cytoplasmic side of the membrane. A helical membrane pass occupies residues 701-721 (IWFHILTGLTHLAVISNAFLL). Residues 722–780 (AFSSDFLPRVYYSWTHAPDLHGFLNFTLARAPPTFTSAHNRTCRYRAFRDDDGHYSPTY) lie on the Extracellular side of the membrane. N-linked (GlcNAc...) asparagine glycosylation is found at N746 and N761. The helical transmembrane segment at 781–801 (WTLLAIRLAFVIVFEHVVFSI) threads the bilayer. At 802-859 (GRVLDLLVPDIPESVEIKVKREYYLAKQALAENEALLGATGVKDDQPPSSEPSLGLPA) the chain is on the cytoplasmic side.

This sequence belongs to the anoctamin family. Highly expressed in the stomach. Expressed at low levels in small intestine and large intestine.

It is found in the cell membrane. It localises to the endoplasmic reticulum. It catalyses the reaction a 1,2-diacyl-sn-glycero-3-phospho-L-serine(in) = a 1,2-diacyl-sn-glycero-3-phospho-L-serine(out). The catalysed reaction is a beta-D-galactosyl-(1&lt;-&gt;1')-N-acylsphing-4-enine(out) = a beta-D-galactosyl-(1&lt;-&gt;1')-N-acylsphing-4-enine(in). The enzyme catalyses a 1,2-diacyl-sn-glycero-3-phosphocholine(in) = a 1,2-diacyl-sn-glycero-3-phosphocholine(out). Its function is as follows. Has calcium-dependent phospholipid scramblase activity; scrambles phosphatidylserine, phosphatidylcholine and galactosylceramide. Does not exhibit calcium-activated chloride channel (CaCC) activity. May play a role in cell-cell interactions. The protein is Anoctamin-7 (Ano7) of Mus musculus (Mouse).